The primary structure comprises 344 residues: Dihydroorotate dehydrogenase (quinone) (344 aa).

FMN is bound by residues 65–69 (AGLDK) and Thr-89. Lys-69 contacts substrate. A substrate-binding site is contributed by 114-118 (NRMGF). Residues Asn-145 and Asn-178 each contribute to the FMN site. Asn-178 contributes to the substrate binding site. Residue Ser-181 is the Nucleophile of the active site. Asn-183 is a substrate binding site. FMN contacts are provided by Lys-223 and Thr-251. Substrate is bound at residue 252 to 253 (NT). Residues Gly-274, Gly-303, and 324–325 (YT) each bind FMN.

The protein belongs to the dihydroorotate dehydrogenase family. Type 2 subfamily. In terms of assembly, monomer. The cofactor is FMN.

It localises to the cell membrane. It carries out the reaction (S)-dihydroorotate + a quinone = orotate + a quinol. The protein operates within pyrimidine metabolism; UMP biosynthesis via de novo pathway; orotate from (S)-dihydroorotate (quinone route): step 1/1. Catalyzes the conversion of dihydroorotate to orotate with quinone as electron acceptor. In Ralstonia nicotianae (strain ATCC BAA-1114 / GMI1000) (Ralstonia solanacearum), this protein is Dihydroorotate dehydrogenase (quinone).